The following is a 290-amino-acid chain: MPSITGKTKLLGVIGYPVGHSLSPVMHNAALQAMASDYAYVAFPIAPEDLTIAIAGLGASGVQGLSVTIPHKQVVMPLLTQITETARQVGAVNTLWRDGHGWQGTNTDVEGFLAPLLELKQDWSGRTAVILGYGGAARAVVVGLTQLGCPEIIVVGRSQEKLAQFANSWTDPKIKQALQVLPWEALSTVIPKASLLINSTPVGMAPHPKQSPLDQSLVEKLPPTAIAYDLIYTPRPTRFLQHAQERGLVTIDGAEMLVQQGAAALKIWLQQEVPVDVMRQALLHHLEKSA.

Residues 21–23 (SLS) and Thr68 each bind shikimate. Lys72 functions as the Proton acceptor in the catalytic mechanism. Glu84 lines the NADP(+) pocket. The shikimate site is built by Asn93 and Asp108. Residues 132–136 (GYGGA) and Leu230 each bind NADP(+). Tyr232 serves as a coordination point for shikimate. NADP(+) is bound at residue Gly253.

It belongs to the shikimate dehydrogenase family. In terms of assembly, homodimer.

The enzyme catalyses shikimate + NADP(+) = 3-dehydroshikimate + NADPH + H(+). The protein operates within metabolic intermediate biosynthesis; chorismate biosynthesis; chorismate from D-erythrose 4-phosphate and phosphoenolpyruvate: step 4/7. Its function is as follows. Involved in the biosynthesis of the chorismate, which leads to the biosynthesis of aromatic amino acids. Catalyzes the reversible NADPH linked reduction of 3-dehydroshikimate (DHSA) to yield shikimate (SA). This chain is Shikimate dehydrogenase (NADP(+)), found in Synechocystis sp. (strain ATCC 27184 / PCC 6803 / Kazusa).